Reading from the N-terminus, the 203-residue chain is Secreted phosphoprotein 24 (203 aa).

The first 23 residues, 1 to 23 (MEKMVMKMLVIFVFGMNHWTCTG), serve as a signal peptide directing secretion. Cystine bridges form between cysteine 86–cysteine 97 and cysteine 110–cysteine 128. At serine 90 the chain carries Phosphoserine. Residues serine 138, serine 139, serine 166, and serine 175 each carry the phosphoserine modification. The interval 155 to 174 (NSHLLGLTPDRSRGEPLYER) is disordered. Residues 164-174 (DRSRGEPLYER) show a composition bias toward basic and acidic residues.

It belongs to the SPP2 family. Post-translationally, multiply phosphorylated at serine residues. In terms of processing, phosphorylation sites are present in the extracellular medium.

It localises to the secreted. Could coordinate an aspect of bone turnover. In Ovis aries (Sheep), this protein is Secreted phosphoprotein 24 (SPP2).